The sequence spans 253 residues: 5-oxoprolinase subunit A (253 aa).

The protein belongs to the LamB/PxpA family. In terms of assembly, forms a complex composed of PxpA, PxpB and PxpC.

The catalysed reaction is 5-oxo-L-proline + ATP + 2 H2O = L-glutamate + ADP + phosphate + H(+). Its function is as follows. Catalyzes the cleavage of 5-oxoproline to form L-glutamate coupled to the hydrolysis of ATP to ADP and inorganic phosphate. In Syntrophobacter fumaroxidans (strain DSM 10017 / MPOB), this protein is 5-oxoprolinase subunit A.